The sequence spans 404 residues: Glucose-1-phosphate adenylyltransferase (404 aa).

Alpha-D-glucose 1-phosphate contacts are provided by residues Tyr-99, Gly-164, 179-180, and Ser-197; that span reads EK.

The protein belongs to the bacterial/plant glucose-1-phosphate adenylyltransferase family.

The enzyme catalyses alpha-D-glucose 1-phosphate + ATP + H(+) = ADP-alpha-D-glucose + diphosphate. It participates in capsule biogenesis; capsule polysaccharide biosynthesis. Its pathway is glycan biosynthesis; glycogen biosynthesis. In terms of biological role, involved in the biosynthesis of ADP-glucose, a building block, required in the biosynthesis of maltose-1-phosphate (M1P) and in the elongation reactions to produce linear alpha-1,4-glucans. Catalyzes the reaction between ATP and alpha-D-glucose 1-phosphate (G1P) to produce pyrophosphate and ADP-Glc. This chain is Glucose-1-phosphate adenylyltransferase, found in Mycobacterium bovis (strain ATCC BAA-935 / AF2122/97).